A 64-amino-acid chain; its full sequence is U6-theraphotoxin-Cg1a (64 aa).

Residues 1–20 form the signal peptide; sequence MTRKILAVLLVFTLVACNNA. Residues 21 to 38 constitute a propeptide that is removed on maturation; the sequence is EKYSETDVEDSPMIQERR. 3 disulfide bridges follow: Cys-39/Cys-55, Cys-46/Cys-58, and Cys-54/Cys-63.

This sequence belongs to the neurotoxin 36 family. 02 subfamily. Expressed by the venom gland.

Its subcellular location is the secreted. Functionally, probable ion channel inhibitor. The sequence is that of U6-theraphotoxin-Cg1a from Chilobrachys guangxiensis (Chinese earth tiger tarantula).